A 404-amino-acid chain; its full sequence is ATP phosphoribosyltransferase regulatory subunit (404 aa).

Belongs to the class-II aminoacyl-tRNA synthetase family. HisZ subfamily. As to quaternary structure, heteromultimer composed of HisG and HisZ subunits.

It localises to the cytoplasm. Its pathway is amino-acid biosynthesis; L-histidine biosynthesis; L-histidine from 5-phospho-alpha-D-ribose 1-diphosphate: step 1/9. Required for the first step of histidine biosynthesis. May allow the feedback regulation of ATP phosphoribosyltransferase activity by histidine. The chain is ATP phosphoribosyltransferase regulatory subunit from Picosynechococcus sp. (strain ATCC 27264 / PCC 7002 / PR-6) (Agmenellum quadruplicatum).